Here is a 71-residue protein sequence, read N- to C-terminus: SPI-2 type 3 secretion system needle filament protein (71 aa).

The protein belongs to the SctF family. As to quaternary structure, the core secretion machinery of the T3SS is composed of approximately 20 different proteins, including cytoplasmic components, a base, an export apparatus and a needle. This subunit polymerizes and forms the helical needle filament.

Its subcellular location is the secreted. It localises to the cell surface. In terms of biological role, component of the type III secretion system (T3SS), also called injectisome, which is used to inject bacterial effector proteins into eukaryotic host cells. SsaG/SctF2 forms the external needle filament that protrudes from the bacterial surface. Functionally, during infection, can induce innate immune responses. The needle proteins interact with host TLR2 or TLR4, and induce signaling by NF-kappa-B and/or AP-1. This activation is MyD88 dependent and results in increased expression of cytokines, including TNF-alpha, IL-6 and IL-8. This chain is SPI-2 type 3 secretion system needle filament protein, found in Salmonella typhimurium (strain LT2 / SGSC1412 / ATCC 700720).